Here is a 367-residue protein sequence, read N- to C-terminus: Cobalt-precorrin-5B C(1)-methyltransferase (367 aa).

Belongs to the CbiD family.

It carries out the reaction Co-precorrin-5B + S-adenosyl-L-methionine = Co-precorrin-6A + S-adenosyl-L-homocysteine. It functions in the pathway cofactor biosynthesis; adenosylcobalamin biosynthesis; cob(II)yrinate a,c-diamide from sirohydrochlorin (anaerobic route): step 6/10. Its function is as follows. Catalyzes the methylation of C-1 in cobalt-precorrin-5B to form cobalt-precorrin-6A. In Priestia megaterium (Bacillus megaterium), this protein is Cobalt-precorrin-5B C(1)-methyltransferase.